We begin with the raw amino-acid sequence, 462 residues long: Arginine biosynthesis bifunctional protein ArgJ, mitochondrial (462 aa).

Substrate is bound by residues threonine 200, lysine 228, threonine 239, glutamate 326, asparagine 457, and threonine 462. Threonine 239 (nucleophile) is an active-site residue.

The protein belongs to the ArgJ family. Heterodimer of an alpha and a beta chain. In terms of processing, the alpha and beta chains are autoproteolytically processed from a single precursor protein within the mitochondrion.

The protein resides in the mitochondrion matrix. It catalyses the reaction N(2)-acetyl-L-ornithine + L-glutamate = N-acetyl-L-glutamate + L-ornithine. It carries out the reaction L-glutamate + acetyl-CoA = N-acetyl-L-glutamate + CoA + H(+). It participates in amino-acid biosynthesis; L-arginine biosynthesis; L-ornithine and N-acetyl-L-glutamate from L-glutamate and N(2)-acetyl-L-ornithine (cyclic): step 1/1. It functions in the pathway amino-acid biosynthesis; L-arginine biosynthesis; N(2)-acetyl-L-ornithine from L-glutamate: step 1/4. Catalyzes two activities which are involved in the cyclic version of arginine biosynthesis: the synthesis of acetylglutamate from glutamate and acetyl-CoA, and of ornithine by transacetylation between acetylornithine and glutamate. The polypeptide is Arginine biosynthesis bifunctional protein ArgJ, mitochondrial (Pyrenophora tritici-repentis (strain Pt-1C-BFP) (Wheat tan spot fungus)).